Here is a 336-residue protein sequence, read N- to C-terminus: MLHLLGQDSRALARKAGISLEDARRITGAVIGRGAPLRSARNVRRAVLDRVEALATPGELRRVACTDAKDGFRRYLLELGDGARVEAVRIPLFDTHHTVCLSSQAGCALGCSFCATGALGLARSLRAWEIVAQLLHVRADSTRPITGVVFMGQGEPFLNYDAVLEAAYTLCDPAGGRIDGRRISISTAGVVPMIRRYTAEGHKFRLCVSLNAAIPWKRRALMPIEEGFPLDELVDAVREHAAQRGRVTLEYVMIAGVNTGDEDAAALGRLLAGIPVRLNPIAVNDATGRHRPPDEAEWNAFRDALARELPGQPIVRRYSGGQDEHAACGMLSSRTR.

The Proton acceptor role is filled by Glu86. The Radical SAM core domain occupies 93 to 322; that stretch reads FDTHHTVCLS…PIVRRYSGGQ (230 aa). An intrachain disulfide couples Cys100 to Cys328. Cys107, Cys111, and Cys114 together coordinate [4Fe-4S] cluster. S-adenosyl-L-methionine-binding positions include 154-155, Ser186, and 209-211; these read GE and SLN. Cys328 functions as the S-methylcysteine intermediate in the catalytic mechanism.

This sequence belongs to the radical SAM superfamily. RlmN family. Requires [4Fe-4S] cluster as cofactor.

Its subcellular location is the cytoplasm. In Anaeromyxobacter sp. (strain Fw109-5), this protein is Probable RNA methyltransferase Anae109_4379.